A 181-amino-acid chain; its full sequence is ECF RNA polymerase sigma factor RpoE (181 aa).

The tract at residues 29 to 96 (LFQHFAPKVK…RRIDGLRKDR (68 aa)) is sigma-70 factor domain-2. The Interaction with polymerase core subunit RpoC signature appears at 53–56 (ECAQ). Positions 129–178 (AIARLPEAQRALIERAFFGDLTHRELAAETGLPLGTIKSRIRLALDRLRQ) are sigma-70 factor domain-4. Residues 151 to 170 (HRELAAETGLPLGTIKSRIR) constitute a DNA-binding region (H-T-H motif).

It belongs to the sigma-70 factor family. ECF subfamily. In terms of assembly, interacts transiently with the RNA polymerase catalytic core formed by RpoA, RpoB, RpoC and RpoZ (2 alpha, 1 beta, 1 beta' and 1 omega subunit) to form the RNA polymerase holoenzyme that can initiate transcription. Forms a 1:1 complex (via sigma-70 factor domain 4) with anti-sigma factor ChrR; this inhibits the interaction of RpoE with the RNA polymerase catalytic core.

Sigma factors are initiation factors that promote the attachment of RNA polymerase to specific initiation sites and are then released. Extracytoplasmic function (ECF) sigma factors are held in an inactive form by a cognate anti-sigma factor until released. Sigma-E controls a transcriptional response to singlet oxygen, a by-product of photosynthesis; its continuous activity requires constant exposure to singlet oxygen. The regulon has about 180 genes that protect against or repair damage induced by singlet oxygen, including itself and rpoH2, a heat shock-responsive sigma factor. This chain is ECF RNA polymerase sigma factor RpoE (rpoE), found in Cereibacter sphaeroides (strain ATCC 17023 / DSM 158 / JCM 6121 / CCUG 31486 / LMG 2827 / NBRC 12203 / NCIMB 8253 / ATH 2.4.1.) (Rhodobacter sphaeroides).